The primary structure comprises 943 residues: Sodium- and chloride-dependent GABA transporter ine (943 aa).

Residues 1-345 (MAENKDVSQV…RQQHWANKMQ (345 aa)) are Cytoplasmic-facing. The interval 103–122 (HKQSPLRHTSVRTRPSSEVL) is disordered. 3 helical membrane passes run 346–366 (FVLACIGYSVGLGNVWRFPYM), 373–393 (GVFLVPYCIILFICSIPLLFM), and 418–438 (GAGLASVVVSFLMSTYYSVII). At 439 to 510 (GYSIYYFFTS…GLEYPGMMRW (72 aa)) the chain is on the extracellular side. Asparagine 476 carries N-linked (GlcNAc...) asparagine glycosylation. 9 consecutive transmembrane segments (helical) span residues 511 to 531 (ELFACLICAWLMVYFATWKSI), 539 to 559 (YFTATFPFVLIIILMVRAVTL), 591 to 607 (FNSLGITFGSMISFASY), 618 to 638 (TVAVSAVNMITSLLVGIFAFS), 679 to 699 (WAVMFFFMLLCLGLNSQFAIV), 723 to 743 (IVVLFVCVISCLFGMPNIIQG), 754 to 774 (YAASVTIMFLAFCQMIAIAWF), 799 to 819 (CWLVLGPCLLFAIWVLSLINY), and 836 to 856 (YGIGWMFASFSLICIPGYAVI). Over 857 to 943 (NFLRSSGDTF…HAEAGGPCGQ (87 aa)) the chain is Cytoplasmic.

The protein belongs to the sodium:neurotransmitter symporter (SNF) (TC 2.A.22) family. As to expression, expressed both maternally and zygotically. Developing embryos exhibit expression in the posterior hindgut, foregut, midgut, Malpighian tubules, anal plate, Garland cells, and a subset of cells in the central nervous system. Central nervous system expression is seen in segmentally repeating in cells flanking the midline of the ventral ganglion. Isoform A and isoform B are colocalized in both the nervous system and the fluid reabsorption system.

It is found in the membrane. Plays a role in neuronal membrane excitation, important for normal response properties of the photoreceptor. Able to control excitability from either neurons or glia cells. Ine negatively regulates neuronal sodium channels. Controls neurotransmitter-mediated signaling pathways associated with the structure of the larval peripheral nerve, ine and eag control perineurial glial growth through partially redundant pathways. Isoform A and isoform B are both functional, although isoform A functions with greater efficiency. Has a role in osmolyte transport within the Malpighian tubule and hindgut. The protein is Sodium- and chloride-dependent GABA transporter ine of Drosophila melanogaster (Fruit fly).